Here is a 162-residue protein sequence, read N- to C-terminus: MINNDSALQLSNVLNQECTRSQVHCQSKKRALEIISELAAKQLGLSSQIVFEAILTREKMGSTGIGNGIAIPHGKLEEDTLRAVGVFVQLETPIAFDAIDNQPVDLLFALLVPADQTKTHLHTLSLVAKRLADKTICRRLRAAQSDEELYEIITEAGSNNEA.

Residues 12–156 (NVLNQECTRS…EELYEIITEA (145 aa)) form the PTS EIIA type-2 domain. Catalysis depends on His73, which acts as the Tele-phosphohistidine intermediate.

It is found in the cytoplasm. Functionally, seems to have a role in regulating nitrogen assimilation. This Klebsiella oxytoca protein is Nitrogen regulatory protein (ptsN).